Consider the following 345-residue polypeptide: Biotin synthase (345 aa).

Residues 67–295 form the Radical SAM core domain; that stretch reads YKVQLASLLS…KSRIRLSAGR (229 aa). The [4Fe-4S] cluster site is built by cysteine 82, cysteine 86, and cysteine 89. [2Fe-2S] cluster is bound by residues cysteine 126, cysteine 158, cysteine 218, and arginine 290.

The protein belongs to the radical SAM superfamily. Biotin synthase family. In terms of assembly, homodimer. It depends on [4Fe-4S] cluster as a cofactor. [2Fe-2S] cluster serves as cofactor.

The catalysed reaction is (4R,5S)-dethiobiotin + (sulfur carrier)-SH + 2 reduced [2Fe-2S]-[ferredoxin] + 2 S-adenosyl-L-methionine = (sulfur carrier)-H + biotin + 2 5'-deoxyadenosine + 2 L-methionine + 2 oxidized [2Fe-2S]-[ferredoxin]. Its pathway is cofactor biosynthesis; biotin biosynthesis; biotin from 7,8-diaminononanoate: step 2/2. Functionally, catalyzes the conversion of dethiobiotin (DTB) to biotin by the insertion of a sulfur atom into dethiobiotin via a radical-based mechanism. This chain is Biotin synthase, found in Prochlorococcus marinus (strain NATL1A).